The sequence spans 521 residues: Non-specific phospholipase C5 (521 aa).

Positions serine 478 to aspartate 487 are enriched in basic and acidic residues. A disordered region spans residues serine 478–asparagine 521. Over residues serine 511–asparagine 521 the composition is skewed to polar residues.

Belongs to the bacterial phospholipase C family. As to expression, specifically expressed in flowers.

It localises to the cytoplasm. It is found in the cytosol. The catalysed reaction is a 1,2-diacyl-sn-glycero-3-phosphocholine + H2O = phosphocholine + a 1,2-diacyl-sn-glycerol + H(+). In terms of biological role, non-specific phospholipase C (PLC) which assumes minor PLC activity during inorganic phosphate starvation. Can hydrolyze both phosphatidylcholine (PC) and phosphatidylethanolamine (PE). Required for normal accumulation of digalactosyldiacylglycerol (DGDG) during phosphate limitation and may contribute to the conversion of phospholipids to diacylglycerol, the substrate for galactolipid synthesis. This is Non-specific phospholipase C5 (NPC5) from Arabidopsis thaliana (Mouse-ear cress).